A 308-amino-acid polypeptide reads, in one-letter code: MSIRERRLISWTPRRIRTTFLAYLALTKPRVIELLLVTTIPAMLLADRGTVDPLLILNTLVGGMLAAAGANTLNCVADADIDKVMKRTARRPLARATVPTRHALIFGLVLTVTSFCWLWLSTNLLSGLLAVATIAFYVFVYTMLLKRRTSQNVVWGGAAGCMPVMIGWSAVTGTIQWPALVMFLIIFFWTPPHTWALAMRYKDDYKAAGVPMLPAVATERQVTRQILIYTWLTVLTTLVLALATGWLYGAVALLAGAWFLVMAHQLYSGVKRGEPVKPLRLFLQSNNYLAVVFCALAIDSALALPTLL.

8 helical membrane passes run Val-31–Val-51, Pro-53–Leu-73, His-102–Thr-122, Leu-124–Leu-144, Thr-149–Ser-169, Ala-170–Thr-190, Leu-242–Met-262, and Tyr-288–Leu-308.

The protein belongs to the UbiA prenyltransferase family. Protoheme IX farnesyltransferase subfamily.

The protein localises to the cell membrane. It catalyses the reaction heme b + (2E,6E)-farnesyl diphosphate + H2O = Fe(II)-heme o + diphosphate. It participates in porphyrin-containing compound metabolism; heme O biosynthesis; heme O from protoheme: step 1/1. Converts heme B (protoheme IX) to heme O by substitution of the vinyl group on carbon 2 of heme B porphyrin ring with a hydroxyethyl farnesyl side group. The protein is Protoheme IX farnesyltransferase of Mycolicibacterium smegmatis (strain ATCC 700084 / mc(2)155) (Mycobacterium smegmatis).